Consider the following 684-residue polypeptide: DNA gyrase subunit B, novobiocin-sensitive (684 aa).

The tract at residues 1-22 (MADSGNPNENTPSVATGENGEV) is disordered. A novobiocin-binding region spans residues 154-302 (VKTDGYRWTQ…RMLSVEIAMQ (149 aa)). Residues 463 to 577 (CEIFIVEGDS…AGHVYLSRPP (115 aa)) enclose the Toprim domain. 3 residues coordinate Mg(2+): glutamate 469, aspartate 542, and aspartate 544.

This sequence belongs to the type II topoisomerase GyrB family. As to quaternary structure, heterotetramer, composed of two GyrA and two GyrB chains. In the heterotetramer, GyrA contains the active site tyrosine that forms a transient covalent intermediate with DNA, while GyrB binds cofactors and catalyzes ATP hydrolysis. Mg(2+) serves as cofactor. The cofactor is Mn(2+). It depends on Ca(2+) as a cofactor.

The protein resides in the cytoplasm. It catalyses the reaction ATP-dependent breakage, passage and rejoining of double-stranded DNA.. Its function is as follows. A type II topoisomerase that negatively supercoils closed circular double-stranded (ds) DNA in an ATP-dependent manner to modulate DNA topology and maintain chromosomes in an underwound state. Negative supercoiling favors strand separation, and DNA replication, transcription, recombination and repair, all of which involve strand separation. Also able to catalyze the interconversion of other topological isomers of dsDNA rings, including catenanes and knotted rings. Type II topoisomerases break and join 2 DNA strands simultaneously in an ATP-dependent manner. The protein is DNA gyrase subunit B, novobiocin-sensitive of Streptomyces niveus (Streptomyces spheroides).